The sequence spans 245 residues: tRNA pseudouridine synthase A (245 aa).

Asp52 serves as the catalytic Nucleophile. Residue Tyr111 participates in substrate binding.

The protein belongs to the tRNA pseudouridine synthase TruA family. In terms of assembly, homodimer.

The catalysed reaction is uridine(38/39/40) in tRNA = pseudouridine(38/39/40) in tRNA. In terms of biological role, formation of pseudouridine at positions 38, 39 and 40 in the anticodon stem and loop of transfer RNAs. The protein is tRNA pseudouridine synthase A of Rickettsia africae (strain ESF-5).